The primary structure comprises 1370 residues: DNA-directed RNA polymerase subunit beta (1370 aa).

This sequence belongs to the RNA polymerase beta chain family. As to quaternary structure, the RNAP catalytic core consists of 2 alpha, 1 beta, 1 beta' and 1 omega subunit. When a sigma factor is associated with the core the holoenzyme is formed, which can initiate transcription.

The catalysed reaction is RNA(n) + a ribonucleoside 5'-triphosphate = RNA(n+1) + diphosphate. In terms of biological role, DNA-dependent RNA polymerase catalyzes the transcription of DNA into RNA using the four ribonucleoside triphosphates as substrates. The protein is DNA-directed RNA polymerase subunit beta of Bordetella bronchiseptica (strain ATCC BAA-588 / NCTC 13252 / RB50) (Alcaligenes bronchisepticus).